We begin with the raw amino-acid sequence, 800 residues long: Phenylalanine--tRNA ligase beta subunit (800 aa).

Residues 39–154 (TKDIKNLVVG…EAQVPGTDAL (116 aa)) enclose the tRNA-binding domain. The region spanning 408–483 (AFITPIDITA…RIYGYDDIPS (76 aa)) is the B5 domain. Asp-461, Asp-467, Glu-470, and Glu-471 together coordinate Mg(2+). Residues 708-800 (PRFPGMSRDI…ALIEQGAVIR (93 aa)) form the FDX-ACB domain.

Belongs to the phenylalanyl-tRNA synthetase beta subunit family. Type 1 subfamily. In terms of assembly, tetramer of two alpha and two beta subunits. The cofactor is Mg(2+).

The protein resides in the cytoplasm. It catalyses the reaction tRNA(Phe) + L-phenylalanine + ATP = L-phenylalanyl-tRNA(Phe) + AMP + diphosphate + H(+). The polypeptide is Phenylalanine--tRNA ligase beta subunit (Staphylococcus aureus (strain USA300)).